A 158-amino-acid polypeptide reads, in one-letter code: NAD(P)H-quinone oxidoreductase subunit J, chloroplastic (158 aa).

This sequence belongs to the complex I 30 kDa subunit family. NDH is composed of at least 16 different subunits, 5 of which are encoded in the nucleus.

It is found in the plastid. The protein resides in the chloroplast thylakoid membrane. It catalyses the reaction a plastoquinone + NADH + (n+1) H(+)(in) = a plastoquinol + NAD(+) + n H(+)(out). The catalysed reaction is a plastoquinone + NADPH + (n+1) H(+)(in) = a plastoquinol + NADP(+) + n H(+)(out). Its function is as follows. NDH shuttles electrons from NAD(P)H:plastoquinone, via FMN and iron-sulfur (Fe-S) centers, to quinones in the photosynthetic chain and possibly in a chloroplast respiratory chain. The immediate electron acceptor for the enzyme in this species is believed to be plastoquinone. Couples the redox reaction to proton translocation, and thus conserves the redox energy in a proton gradient. In Psilotum nudum (Whisk fern), this protein is NAD(P)H-quinone oxidoreductase subunit J, chloroplastic.